The primary structure comprises 539 residues: Chaperonin GroEL 1 (539 aa).

ATP is bound by residues 30 to 33 (TLGP), lysine 51, 87 to 91 (DGTTT), glycine 415, 480 to 482 (NAA), and aspartate 496.

It belongs to the chaperonin (HSP60) family. In terms of assembly, forms a cylinder of 14 subunits composed of two heptameric rings stacked back-to-back. Interacts with the co-chaperonin GroES.

The protein resides in the cytoplasm. It catalyses the reaction ATP + H2O + a folded polypeptide = ADP + phosphate + an unfolded polypeptide.. Functionally, together with its co-chaperonin GroES, plays an essential role in assisting protein folding. The GroEL-GroES system forms a nano-cage that allows encapsulation of the non-native substrate proteins and provides a physical environment optimized to promote and accelerate protein folding. The chain is Chaperonin GroEL 1 from Erythrobacter litoralis (strain HTCC2594).